We begin with the raw amino-acid sequence, 328 residues long: Malate dehydrogenase (328 aa).

12–18 (GAAGQIG) lines the NAD(+) pocket. Substrate is bound by residues arginine 95 and arginine 101. NAD(+) contacts are provided by residues asparagine 108, glutamine 115, and 132–134 (VGN). Substrate contacts are provided by asparagine 134 and arginine 165. Histidine 190 (proton acceptor) is an active-site residue.

The protein belongs to the LDH/MDH superfamily. MDH type 2 family.

The enzyme catalyses (S)-malate + NAD(+) = oxaloacetate + NADH + H(+). In terms of biological role, catalyzes the reversible oxidation of malate to oxaloacetate. This is Malate dehydrogenase from Polaromonas naphthalenivorans (strain CJ2).